An 89-amino-acid polypeptide reads, in one-letter code: Glutamyl-tRNA(Gln) amidotransferase subunit C (89 aa).

It belongs to the GatC family. As to quaternary structure, heterotrimer of A, B and C subunits.

It carries out the reaction L-glutamyl-tRNA(Gln) + L-glutamine + ATP + H2O = L-glutaminyl-tRNA(Gln) + L-glutamate + ADP + phosphate + H(+). It catalyses the reaction L-aspartyl-tRNA(Asn) + L-glutamine + ATP + H2O = L-asparaginyl-tRNA(Asn) + L-glutamate + ADP + phosphate + 2 H(+). In terms of biological role, allows the formation of correctly charged Asn-tRNA(Asn) or Gln-tRNA(Gln) through the transamidation of misacylated Asp-tRNA(Asn) or Glu-tRNA(Gln) in organisms which lack either or both of asparaginyl-tRNA or glutaminyl-tRNA synthetases. The reaction takes place in the presence of glutamine and ATP through an activated phospho-Asp-tRNA(Asn) or phospho-Glu-tRNA(Gln). This is Glutamyl-tRNA(Gln) amidotransferase subunit C from Thermus thermophilus (strain ATCC 27634 / DSM 579 / HB8).